A 476-amino-acid chain; its full sequence is Eukaryotic translation initiation factor 3 subunit L (476 aa).

Positions 257–452 (DAIRMFSHIL…DLDYALENDL (196 aa)) constitute a PCI domain.

Belongs to the eIF-3 subunit L family. As to quaternary structure, component of the eukaryotic translation initiation factor 3 (eIF-3) complex.

Its subcellular location is the cytoplasm. Component of the eukaryotic translation initiation factor 3 (eIF-3) complex, which is involved in protein synthesis of a specialized repertoire of mRNAs and, together with other initiation factors, stimulates binding of mRNA and methionyl-tRNAi to the 40S ribosome. The eIF-3 complex specifically targets and initiates translation of a subset of mRNAs involved in cell proliferation. The sequence is that of Eukaryotic translation initiation factor 3 subunit L from Neosartorya fischeri (strain ATCC 1020 / DSM 3700 / CBS 544.65 / FGSC A1164 / JCM 1740 / NRRL 181 / WB 181) (Aspergillus fischerianus).